The following is a 424-amino-acid chain: CAAX prenyl protease 1 homolog (424 aa).

Transmembrane regions (helical) follow at residues 3 to 23 (IPFM…ETYL), 67 to 87 (EFVT…PWFW), 109 to 129 (LSFL…FSLY), 155 to 175 (GTFL…FIVQ), and 185 to 205 (LWAF…VLIA). His284 lines the Zn(2+) pocket. Residue Glu285 is part of the active site. His288 serves as a coordination point for Zn(2+). 2 consecutive transmembrane segments (helical) span residues 295-315 (TYSF…YTLV) and 332-352 (VLIG…LVSF). Glu362 serves as a coordination point for Zn(2+). Asp366 serves as the catalytic Proton donor.

It belongs to the peptidase M48A family. Zn(2+) serves as cofactor. Expressed in leaves, stems and flowers.

Its subcellular location is the endoplasmic reticulum membrane. It catalyses the reaction Hydrolyzes the peptide bond -P2-(S-farnesyl or geranylgeranyl)C-P1'-P2'-P3'-COOH where P1' and P2' are amino acids with aliphatic side chains and P3' is any C-terminal residue.. Proteolytically removes the C-terminal three residues of farnesylated proteins. The substrate specificity is only partially overlapping with that of FACE2. This chain is CAAX prenyl protease 1 homolog (FACE1), found in Arabidopsis thaliana (Mouse-ear cress).